A 237-amino-acid chain; its full sequence is Phosphoribosylaminoimidazole-succinocarboxamide synthase (237 aa).

The protein belongs to the SAICAR synthetase family.

It carries out the reaction 5-amino-1-(5-phospho-D-ribosyl)imidazole-4-carboxylate + L-aspartate + ATP = (2S)-2-[5-amino-1-(5-phospho-beta-D-ribosyl)imidazole-4-carboxamido]succinate + ADP + phosphate + 2 H(+). It participates in purine metabolism; IMP biosynthesis via de novo pathway; 5-amino-1-(5-phospho-D-ribosyl)imidazole-4-carboxamide from 5-amino-1-(5-phospho-D-ribosyl)imidazole-4-carboxylate: step 1/2. This is Phosphoribosylaminoimidazole-succinocarboxamide synthase from Enterococcus faecalis (strain ATCC 700802 / V583).